The sequence spans 855 residues: Spindle and centriole-associated protein 1 (855 aa).

The segment at 164 to 200 (QALNDVDGEEEGTVTSQSGESENENELDNSLNSQSNT) is disordered. Thr235 is subject to Phosphothreonine. Positions 300 to 311 (KPNLHALSKPKK) are enriched in basic residues. The tract at residues 300–328 (KPNLHALSKPKKNMLSGSTTSADLPNRTN) is disordered. A compositionally biased stretch (polar residues) spans 314-328 (LSGSTTSADLPNRTN). The stretch at 325–437 (NRTNSNLDVL…TQARLRQYMV (113 aa)) forms a coiled coil. Residues Ser640 and Ser644 each carry the phosphoserine modification. Residues 725–751 (GSMEERIAELNRQSMEARGKLLQLIEQ) adopt a coiled-coil conformation. Residues Ser760, Ser764, and Ser819 each carry the phosphoserine modification. Residues 789-834 (EAPESSKCSTVSPVSEINTRRSSGATSNSCSPLNATSGSGRFTPLN) form a disordered region. The span at 794 to 828 (SKCSTVSPVSEINTRRSSGATSNSCSPLNATSGSG) shows a compositional bias: polar residues.

Interacts with CEP120.

It is found in the cytoplasm. It localises to the cytoskeleton. Its subcellular location is the microtubule organizing center. The protein localises to the centrosome. The protein resides in the centriole. It is found in the spindle. Functionally, regulator required for centriole duplication, for proper bipolar spindle formation and chromosome congression in mitosis. This chain is Spindle and centriole-associated protein 1 (SPICE1), found in Pongo abelii (Sumatran orangutan).